The chain runs to 524 residues: Nucleoporin NUP56 (524 aa).

The segment at 1 to 219 (MADDPHNTST…SSMAKFASST (219 aa)) is disordered. 3 stretches are compositionally biased toward basic and acidic residues: residues 28–80 (VKED…EPEK), 114–168 (THDE…KEVE), and 179–199 (SAEKPKIEEKKDESKDTKVDK). Residues 37-44 (ARRELKQT) carry the Nuclear localization signal motif. Positions 111–133 (KKRTHDELEQDGKEEEEKKEGEK) form a coiled coil. Residues 200–219 (PQTSSSAFANSSMAKFASST) show a composition bias toward polar residues. FG repeat units follow at residues 223-224 (FG), 226-227 (FG), 237-238 (FG), 247-248 (FG), 266-267 (FG), 312-313 (FG), and 328-329 (FG). Disordered stretches follow at residues 247 to 284 (FGSKSADASAAPAGPPKLSFGSASAASPFASLNGQAGG) and 300 to 371 (GSSA…GEEK). A compositionally biased stretch (low complexity) spans 248 to 277 (GSKSADASAAPAGPPKLSFGSASAASPFAS). 2 stretches are compositionally biased toward acidic residues: residues 332–345 (ESDEEDEGEGEEGE) and 352–362 (GEGEEKEEEEK). A coiled-coil region spans residues 345-376 (EENKSENGEGEEKEEEEKEEKASGEEKKKFKL). Residues 377 to 475 (QKVHIDDGEG…TPILPAMKFQ (99 aa)) enclose the RanBD1 domain. Residues 503–524 (SQANATQFSNMVEKIKEKLAAA) adopt a coiled-coil conformation.

As to quaternary structure, the nuclear pore complex (NPC) constitutes the exclusive means of nucleocytoplasmic transport. NPCs allow the passive diffusion of ions and small molecules and the active, nuclear transport receptor-mediated bidirectional transport of macromolecules such as proteins, RNAs, ribonucleoparticles (RNPs), and ribosomal subunits across the nuclear envelope. The 55-60 MDa NPC is composed of at least 28 different subunits: AMO1, ELYS, GLE1, GLE2, MLP1, NDC1, NIC96, NSP1, NUP133, NUP145, NUP152, NUP159, NUP170, NUP188, NUP192, NUP37, NUP49, NUP53, NUP56, NUP57, NUP82, NUP84, NUP85, POM152, POM33, POM34, SEC13 and SEH1. Due to its 8-fold rotational symmetry, all subunits are present with 8 copies or multiples thereof.

The protein localises to the nucleus. Its subcellular location is the nuclear pore complex. It is found in the nucleus membrane. Functions as a component of the nuclear pore complex (NPC). NPC components, collectively referred to as nucleoporins (NUPs), can play the role of both NPC structural components and of docking or interaction partners for transiently associated nuclear transport factors. Active directional transport is assured by both, a Phe-Gly (FG) repeat affinity gradient for these transport factors across the NPC and a transport cofactor concentration gradient across the nuclear envelope (GSP1 and GSP2 GTPases associated predominantly with GTP in the nucleus, with GDP in the cytoplasm). This is Nucleoporin NUP56 (NUP56) from Chaetomium thermophilum (strain DSM 1495 / CBS 144.50 / IMI 039719) (Thermochaetoides thermophila).